A 346-amino-acid chain; its full sequence is D-alanine--D-alanine ligase (346 aa).

The 195-residue stretch at 133 to 327 folds into the ATP-grasp domain; it reads KLYAKSVGVK…ALADQISLEK (195 aa). Position 159–211 (159–211) interacts with ATP; sequence LSFPCIIKPARLGSSIGISIVKDEKDLEYAKDVGFEFDNDLVVEEFKNNIKEY. Positions 284, 296, and 298 each coordinate Mg(2+).

This sequence belongs to the D-alanine--D-alanine ligase family. Mg(2+) serves as cofactor. The cofactor is Mn(2+).

Its subcellular location is the cytoplasm. The catalysed reaction is 2 D-alanine + ATP = D-alanyl-D-alanine + ADP + phosphate + H(+). It participates in cell wall biogenesis; peptidoglycan biosynthesis. Its function is as follows. Cell wall formation. In Campylobacter jejuni subsp. jejuni serotype O:23/36 (strain 81-176), this protein is D-alanine--D-alanine ligase.